A 373-amino-acid polypeptide reads, in one-letter code: ATP phosphoribosyltransferase regulatory subunit (373 aa).

Belongs to the class-II aminoacyl-tRNA synthetase family. HisZ subfamily. As to quaternary structure, heteromultimer composed of HisG and HisZ subunits.

It is found in the cytoplasm. It participates in amino-acid biosynthesis; L-histidine biosynthesis; L-histidine from 5-phospho-alpha-D-ribose 1-diphosphate: step 1/9. Its function is as follows. Required for the first step of histidine biosynthesis. May allow the feedback regulation of ATP phosphoribosyltransferase activity by histidine. In Rhizobium etli (strain CIAT 652), this protein is ATP phosphoribosyltransferase regulatory subunit.